The following is a 528-amino-acid chain: Benzoylformate decarboxylase (528 aa).

Residues Asn-117, Leu-118, and Arg-120 each contribute to the Mg(2+) site. A thiamine pyrophosphate binding region spans residues 377–460 (TSTTAQMWQR…VIMNNGTYGA (84 aa)). Asp-428, Asn-455, and Thr-457 together coordinate Ca(2+).

It belongs to the TPP enzyme family. As to quaternary structure, homotetramer. It depends on Ca(2+) as a cofactor. Thiamine diphosphate serves as cofactor. Mg(2+) is required as a cofactor.

It carries out the reaction phenylglyoxylate + H(+) = benzaldehyde + CO2. It participates in aromatic compound metabolism; (R)-mandelate degradation; benzoate from (R)-mandelate: step 3/4. The protein is Benzoylformate decarboxylase (mdlC) of Pseudomonas putida (Arthrobacter siderocapsulatus).